A 522-amino-acid chain; its full sequence is Glutamyl-tRNA(Gln) amidotransferase subunit A (522 aa).

Residues Lys-88 and Ser-163 each act as charge relay system in the active site. Residue Ser-187 is the Acyl-ester intermediate of the active site.

This sequence belongs to the amidase family. GatA subfamily. Heterotrimer of A, B and C subunits.

The enzyme catalyses L-glutamyl-tRNA(Gln) + L-glutamine + ATP + H2O = L-glutaminyl-tRNA(Gln) + L-glutamate + ADP + phosphate + H(+). Allows the formation of correctly charged Gln-tRNA(Gln) through the transamidation of misacylated Glu-tRNA(Gln) in organisms which lack glutaminyl-tRNA synthetase. The reaction takes place in the presence of glutamine and ATP through an activated gamma-phospho-Glu-tRNA(Gln). The sequence is that of Glutamyl-tRNA(Gln) amidotransferase subunit A from Paenarthrobacter aurescens (strain TC1).